We begin with the raw amino-acid sequence, 878 residues long: Alanine--tRNA ligase (878 aa).

Zn(2+)-binding residues include His-568, His-572, Cys-669, and His-673.

Belongs to the class-II aminoacyl-tRNA synthetase family. Zn(2+) serves as cofactor.

The protein localises to the cytoplasm. It catalyses the reaction tRNA(Ala) + L-alanine + ATP = L-alanyl-tRNA(Ala) + AMP + diphosphate. In terms of biological role, catalyzes the attachment of alanine to tRNA(Ala) in a two-step reaction: alanine is first activated by ATP to form Ala-AMP and then transferred to the acceptor end of tRNA(Ala). Also edits incorrectly charged Ser-tRNA(Ala) and Gly-tRNA(Ala) via its editing domain. The protein is Alanine--tRNA ligase of Polaromonas sp. (strain JS666 / ATCC BAA-500).